Here is a 229-residue protein sequence, read N- to C-terminus: Ribonuclease 3 (229 aa).

The region spanning 5–127 (LDRLERKLGY…LIGAIYQDAD (123 aa)) is the RNase III domain. E40 contributes to the Mg(2+) binding site. The active site involves D44. Mg(2+)-binding residues include D113 and E116. The active site involves E116. In terms of domain architecture, DRBM spans 154–224 (DPKTRLQEFL…AAAALIALGV (71 aa)).

Belongs to the ribonuclease III family. Homodimer. It depends on Mg(2+) as a cofactor.

The protein localises to the cytoplasm. It carries out the reaction Endonucleolytic cleavage to 5'-phosphomonoester.. Digests double-stranded RNA. Involved in the processing of primary rRNA transcript to yield the immediate precursors to the large and small rRNAs (23S and 16S). Processes some mRNAs, and tRNAs when they are encoded in the rRNA operon. Processes pre-crRNA and tracrRNA of type II CRISPR loci if present in the organism. In Pseudomonas entomophila (strain L48), this protein is Ribonuclease 3.